Reading from the N-terminus, the 419-residue chain is D-galactonate dehydratase family member SEN1436 (419 aa).

The substrate site is built by Q45 and H129. Residue Y160 is the Proton donor/acceptor of the active site. D225 contacts Mg(2+). The Proton donor/acceptor role is filled by H227. 2 residues coordinate Mg(2+): E251 and E277. Substrate contacts are provided by E277, R298, H327, D331, and E354.

This sequence belongs to the mandelate racemase/muconate lactonizing enzyme family. GalD subfamily. As to quaternary structure, homotetramer. It depends on Mg(2+) as a cofactor.

The enzyme catalyses D-gluconate = 2-dehydro-3-deoxy-D-gluconate + H2O. Functionally, has low D-gluconate dehydratase activity (in vitro), suggesting that it has no significant role in D-gluconate degradation in vivo. Has no detectable activity with a panel of 70 other acid sugars (in vitro). This is D-galactonate dehydratase family member SEN1436 from Salmonella enteritidis PT4 (strain P125109).